The chain runs to 443 residues: MEEDSQEDSNLPPKVWHSEMTVSVTGKPPSTVEEDGLPKETDVETIPEILETREPLSLPDVLRISAVLEDTTDQLSILNYIMPIQYEGRQSVCVKSREMNLEGKNLDKLPVASTVTKTPSPLITKERPSLPEIRQGGQFAVEFCKTQDLLFKKPARQTIMTTETLKKIQIDRQFFSDVIADTIEELQDSGTYNSLLQALSKERENKMHFYDVIAREEKGRKQIISLQKQLINVKKEWQFEVQSQNEYIANLKDQLQEMKAKSNLENRYMKTNTELQIAQTQRKCNRTEEVLLEEIEKLRMKTEEEARIHMDIEMFLRKQQQKLEERLEFWMEKYDKDTEMKQNELNALKATKASDLAHLQDLAKTIRECEQVIIEDRIEKEKSKNKIEQDLLELKSVIKLQAWWRGTMIRREIGGFKMPKDKVDSKDSKGKGKGKDKRRGKKK.

2 disordered regions span residues 1–40 (MEED…LPKE) and 415–443 (GFKM…GKKK). In terms of domain architecture, IQ spans 393–422 (ELKSVIKLQAWWRGTMIRREIGGFKMPKDK). Basic and acidic residues predominate over residues 415–430 (GFKMPKDKVDSKDSKG). The span at 431–443 (KGKGKDKRRGKKK) shows a compositional bias: basic residues.

It belongs to the DRC9 family. In terms of assembly, component of the nexin-dynein regulatory complex (N-DRC). Interacts (via IQ domain) with CALM when calcium levels are low. Does not interact with CALM in the presence of Ca(2+). Interacts with the HSP70 proteins HSPA1L and HSPA8. May form a complex with CAMK4 and HSP70.

It is found in the cytoplasm. The protein resides in the cell projection. Its subcellular location is the cilium. It localises to the flagellum. The protein localises to the cytoskeleton. It is found in the flagellum axoneme. Its function is as follows. Component of the nexin-dynein regulatory complex (N-DRC), a key regulator of ciliary/flagellar motility which maintains the alignment and integrity of the distal axoneme and regulates microtubule sliding in motile axonemes. Binds calmodulin when cellular Ca(2+) levels are low and thereby contributes to the regulation of calcium and calmodulin-dependent protein kinase IV (CAMK4) activity; contributes to the regulation of CAMK4 signaling cascades. Required for normal axoneme assembly in sperm flagella, normal sperm tail formation and for male fertility. The sequence is that of Dynein regulatory complex protein 9 (IQCG) from Macaca fascicularis (Crab-eating macaque).